Reading from the N-terminus, the 520-residue chain is Probable glycerol-3-phosphate acyltransferase 3 (520 aa).

Helical transmembrane passes span 5 to 20 (ISIF…RFIL), 64 to 84 (YFML…LFIL), 88 to 108 (ISLM…FFGI), 264 to 284 (TLMN…AAAA), and 286 to 306 (LFVS…FSGC). The HXXXXD motif signature appears at 334 to 339 (HRTLLD).

Belongs to the GPAT/DAPAT family. Widely expressed at low level. Expressed at higher level in seedlings and leaves.

Its subcellular location is the membrane. The enzyme catalyses sn-glycerol 3-phosphate + an acyl-CoA = a 1-acyl-sn-glycero-3-phosphate + CoA. It functions in the pathway phospholipid metabolism; CDP-diacylglycerol biosynthesis; CDP-diacylglycerol from sn-glycerol 3-phosphate: step 1/3. Esterifies acyl-group from acyl-ACP to the sn-1 position of glycerol-3-phosphate, an essential step in glycerolipid biosynthesis. This is Probable glycerol-3-phosphate acyltransferase 3 (GPAT3) from Arabidopsis thaliana (Mouse-ear cress).